Consider the following 247-residue polypeptide: Phosphoribosylaminoimidazole-succinocarboxamide synthase (247 aa).

It belongs to the SAICAR synthetase family.

The enzyme catalyses 5-amino-1-(5-phospho-D-ribosyl)imidazole-4-carboxylate + L-aspartate + ATP = (2S)-2-[5-amino-1-(5-phospho-beta-D-ribosyl)imidazole-4-carboxamido]succinate + ADP + phosphate + 2 H(+). The protein operates within purine metabolism; IMP biosynthesis via de novo pathway; 5-amino-1-(5-phospho-D-ribosyl)imidazole-4-carboxamide from 5-amino-1-(5-phospho-D-ribosyl)imidazole-4-carboxylate: step 1/2. This chain is Phosphoribosylaminoimidazole-succinocarboxamide synthase, found in Methanopyrus kandleri (strain AV19 / DSM 6324 / JCM 9639 / NBRC 100938).